A 453-amino-acid polypeptide reads, in one-letter code: tRNA modification GTPase MnmE (453 aa).

Residues R28, E86, and K125 each contribute to the (6S)-5-formyl-5,6,7,8-tetrahydrofolate site. A TrmE-type G domain is found at 221 to 375 (GIKIAIVGEP…LIKYLEETSL (155 aa)). N231 contacts K(+). Residues 231-236 (NAGKSS), 250-256 (TNIPGTT), and 276-279 (DTAG) each bind GTP. Residue S235 participates in Mg(2+) binding. K(+)-binding residues include T250, I252, and T255. T256 serves as a coordination point for Mg(2+). K453 provides a ligand contact to (6S)-5-formyl-5,6,7,8-tetrahydrofolate.

The protein belongs to the TRAFAC class TrmE-Era-EngA-EngB-Septin-like GTPase superfamily. TrmE GTPase family. As to quaternary structure, homodimer. Heterotetramer of two MnmE and two MnmG subunits. K(+) serves as cofactor.

It localises to the cytoplasm. Exhibits a very high intrinsic GTPase hydrolysis rate. Involved in the addition of a carboxymethylaminomethyl (cmnm) group at the wobble position (U34) of certain tRNAs, forming tRNA-cmnm(5)s(2)U34. In Mycoplasmoides gallisepticum (strain R(low / passage 15 / clone 2)) (Mycoplasma gallisepticum), this protein is tRNA modification GTPase MnmE.